Consider the following 426-residue polypeptide: Lactate racemase (426 aa).

Residue 72–75 (DHTR) coordinates Ni(II)-pyridinium-3,5-bisthiocarboxylate mononucleotide. Residues His108 and His174 each act as proton donor/acceptor in the active site. The Ni(II)-pyridinium-3,5-bisthiocarboxylate mononucleotide site is built by Lys184 and His200. Residues Gln295 and Lys298 each contribute to the substrate site.

It belongs to the lactate racemase family. As to quaternary structure, homodimer. Requires Ni(II)-pyridinium-3,5-bisthiocarboxylate mononucleotide as cofactor.

The catalysed reaction is (S)-lactate = (R)-lactate. Its activity is regulated as follows. Activation of the apo-enzyme requires the three accessory proteins LarB, LarE and LarC, that are involved in the biosynthesis of the nickel-pincer cofactor of LarA. Its function is as follows. Catalyzes the interconversion between the D- and L-isomers of lactate. This chain is Lactate racemase, found in Thermoanaerobacterium thermosaccharolyticum (strain ATCC 7956 / DSM 571 / NCIMB 9385 / NCA 3814 / NCTC 13789 / WDCM 00135 / 2032) (Clostridium thermosaccharolyticum).